Here is a 419-residue protein sequence, read N- to C-terminus: D-amino acid dehydrogenase (419 aa).

3 to 17 is an FAD binding site; that stretch reads VLVLGAGVAGVSSVW.

Belongs to the DadA oxidoreductase family. Requires FAD as cofactor.

It catalyses the reaction a D-alpha-amino acid + A + H2O = a 2-oxocarboxylate + AH2 + NH4(+). It functions in the pathway amino-acid degradation; D-alanine degradation; NH(3) and pyruvate from D-alanine: step 1/1. Functionally, oxidative deamination of D-amino acids. The polypeptide is D-amino acid dehydrogenase (Neisseria gonorrhoeae (strain ATCC 700825 / FA 1090)).